We begin with the raw amino-acid sequence, 302 residues long: UDP-N-acetylenolpyruvoylglucosamine reductase (302 aa).

An FAD-binding PCMH-type domain is found at 31–196 (KIGGPADVLA…LRAWISLERG (166 aa)). Arg-175 is an active-site residue. Residue Ser-225 is the Proton donor of the active site. Residue Glu-295 is part of the active site.

It belongs to the MurB family. It depends on FAD as a cofactor.

The protein resides in the cytoplasm. It carries out the reaction UDP-N-acetyl-alpha-D-muramate + NADP(+) = UDP-N-acetyl-3-O-(1-carboxyvinyl)-alpha-D-glucosamine + NADPH + H(+). The protein operates within cell wall biogenesis; peptidoglycan biosynthesis. Cell wall formation. The sequence is that of UDP-N-acetylenolpyruvoylglucosamine reductase from Caldanaerobacter subterraneus subsp. tengcongensis (strain DSM 15242 / JCM 11007 / NBRC 100824 / MB4) (Thermoanaerobacter tengcongensis).